The chain runs to 1047 residues: Atrial natriuretic peptide receptor 2 (1047 aa).

The signal sequence occupies residues 1–16 (MALPSLLLVVAALAGG). The Extracellular segment spans residues 17-458 (VRPPGARNLT…DKTPLSTLAI (442 aa)). N-linked (GlcNAc...) asparagine glycans are attached at residues N24 and N35. A disulfide bond links C75 and C101. N-linked (GlcNAc...) asparagine glycosylation is found at N161, N195, N244, N277, and N349. Residues 459–478 (VALGTGITFIMFGVSSFLIF) traverse the membrane as a helical segment. Residues 479–1047 (RKLMLEKELA…GERKGPPGLL (569 aa)) lie on the Cytoplasmic side of the membrane. S513 carries the post-translational modification Phosphoserine. A Protein kinase domain is found at 513-786 (SRLTLSLRGS…PDFGQIKGFI (274 aa)). Residue T516 is modified to Phosphothreonine. Residues S518, S522, S523, and S526 each carry the phosphoserine modification. T529 carries the phosphothreonine modification. The 131-residue stretch at 861–991 (TIYFSDIVGF…DTVNTASRME (131 aa)) folds into the Guanylate cyclase domain.

Belongs to the adenylyl cyclase class-4/guanylyl cyclase family. In terms of processing, phosphorylated. Phosphorylation of the protein kinase-like domain is required for full activation by CNP. Post-translationally, glycosylated.

Its subcellular location is the cell membrane. It catalyses the reaction GTP = 3',5'-cyclic GMP + diphosphate. Its function is as follows. Receptor for the C-type natriuretic peptide NPPC/CNP hormone. Has guanylate cyclase activity upon binding of its ligand. May play a role in the regulation of skeletal growth. The protein is Atrial natriuretic peptide receptor 2 (Npr2) of Rattus norvegicus (Rat).